A 147-amino-acid polypeptide reads, in one-letter code: HTH-type transcriptional regulator HmrR (147 aa).

In terms of domain architecture, HTH merR-type spans 1 to 69; sequence MNIGEASKVS…VEQIKELLAL (69 aa). The H-T-H motif DNA-binding region spans 4–23; the sequence is GEASKVSGVSSKMIRYYEQI.

In terms of assembly, homodimer.

The protein resides in the cytoplasm. Regulates the transcription of actP. It detects cytoplasmic copper stress and activates transcription in response to increasing copper concentrations. In the absence of copper, it negatively regulates the transcription of actP. The protein is HTH-type transcriptional regulator HmrR (hmrR) of Sinorhizobium medicae (strain WSM419) (Ensifer medicae).